The chain runs to 843 residues: Proto-oncogene vav (843 aa).

The region spanning 1-119 (MELWRQCTHW…YTLSALSWTP (119 aa)) is the Calponin-homology (CH) domain. Residues 194-373 (KRCCCLREIQ…RDLAQCVNEV (180 aa)) enclose the DH domain. One can recognise a PH domain in the interval 402 to 504 (RPKIDGELKI…WMEQFEMAIS (103 aa)). The segment at 515-564 (GHDFQMFSFEETTSCKACQMLLRGTFYQGYRCYRCRAPAHKECLGRVPPC) adopts a Phorbol-ester/DAG-type zinc-finger fold. An SH3 1 domain is found at 590-658 (LGLPKMEVCQ…PCNRVRPYVH (69 aa)). One can recognise an SH2 domain in the interval 669–763 (WYAGPMERAG…SLDTTLQFPY (95 aa)). An SH3 2 domain is found at 780 to 840 (KYFGTAKARY…PSNYVEEDYS (61 aa)). Residues tyrosine 824 and tyrosine 842 each carry the phosphotyrosine modification.

As to quaternary structure, interacts with SHB. Interacts with APS, DOCK2, GRB2, GRB3, DOCK2, SLA, TEC and ZNF655/VIK. Interacts with SIAH2; without leading to its degradation. Associates with BLNK, PLCG1, GRB2 and NCK1 in a B-cell antigen receptor-dependent fashion. Interacts with CBLB; which inhibits tyrosine phosphorylation and down-regulates activity. May interact with CCPG1. Interacts with CLNK. Interacts with THEMIS2. Interacts with NEK3 and this interaction is prolactin-dependent. Interacts with ITK. Interacts with PTK2B/PYK2. Interacts with HCK. Interacts with PTK2B/PYK2. Interacts (via SH2 domain) with SYK. Interacts with ANKRD54. Interacts with CD6. Interacts with LCP2; this interaction plays a role in TCR-mediated cytokine production. In terms of processing, phosphorylated by FYN. Phosphorylated on tyrosine residues by HCK in response to IFNG and bacterial lipopolysaccharide (LPS).

Functionally, couples tyrosine kinase signals with the activation of the Rho/Rac GTPases, thus leading to cell differentiation and/or proliferation. The chain is Proto-oncogene vav (Vav1) from Rattus norvegicus (Rat).